The chain runs to 300 residues: MTTTNGRRPIIAFMSDLGITDDSVAQCKGLMLSVCPDVTIVDICHTMQPWDVEEGARYIVDLPRLFPEGTVFATTTYPATGTTARSVALRIAHASKGGARGQWAGSGAGFERKEGSYIYIAPNNGLLTTVIKEHGYLEAYEVSSPEVIPEQPEPTFYSREMVALPSAHLAAGFPLEKVGRRLADDEIVRFERKDPELVADHDLVGYVTNIDHPFGNVWTNIHRTDLEKLGVGYGTKLRITLDGVLPFELPLSPTFADAGEIGAAVAYLSSRGYLALARNAASLAYPYNLKAGISVQVKVG.

Residues aspartate 16, 21–23, tyrosine 77, serine 158, aspartate 211, asparagine 216, 270–271, and 278–280 each bind S-adenosyl-L-methionine; these read DDS, SR, and RNA.

The protein belongs to the SAM hydrolase / SAM-dependent halogenase family. As to quaternary structure, homohexamer.

It catalyses the reaction fluoride + S-adenosyl-L-methionine = 5'-deoxy-5'-fluoroadenosine + L-methionine. It carries out the reaction chloride + S-adenosyl-L-methionine = 5'-chloro-5'-deoxyadenosine + L-methionine. Activity is severely inhibited by 1 mM Cu(2+) or Zn(2+). Catalyzes the formation of a C-F bond by combining S-adenosyl-L-methionine (SAM) and fluoride to generate 5'-fluoro-5'-deoxyadenosine (5'-FDA) and L-methionine. Probably involved in fluoroacetate (FAc) and 4-fluorothreonine (4-FT) biosynthesis. In vitro, can also catalyze the conversion of chloride and SAM to 5'-chloro-5'-deoxyadenosine (5'-CIDA) and L-methionine in the presence of L-amino acid oxidase. This Nocardia brasiliensis (strain ATCC 700358 / HUJEG-1) protein is Fluorinase.